The primary structure comprises 91 residues: MQVVRIFTDMSISPSLSPRQCPDRYAFRAGRNLPDKEFRYLRTVLVTAAVHRGFGRRLPCHQVTNFLDLPALGRRQPPYMVLRLCGDLCFW.

It localises to the plastid. Its subcellular location is the chloroplast. This is an uncharacterized protein from Phalaenopsis aphrodite subsp. formosana (Moth orchid).